The following is a 567-amino-acid chain: Urease subunit alpha (567 aa).

Residues His-134, His-136, and Lys-217 each contribute to the Ni(2+) site. Lys-217 is subject to N6-carboxylysine. His-219 provides a ligand contact to substrate. The Ni(2+) site is built by His-246 and His-272. Catalysis depends on His-320, which acts as the Proton donor. Residue Asp-360 participates in Ni(2+) binding.

Belongs to the metallo-dependent hydrolases superfamily. Urease alpha subunit family. In terms of assembly, heterotrimer of UreA (gamma), UreB (beta) and UreC (alpha) subunits. Three heterotrimers associate to form the active enzyme. The cofactor is Ni cation. In terms of processing, carboxylation allows a single lysine to coordinate two nickel ions.

It localises to the cytoplasm. It carries out the reaction urea + 2 H2O + H(+) = hydrogencarbonate + 2 NH4(+). The protein operates within nitrogen metabolism; urea degradation; CO(2) and NH(3) from urea (urease route): step 1/1. The chain is Urease subunit alpha from Polynucleobacter asymbioticus (strain DSM 18221 / CIP 109841 / QLW-P1DMWA-1) (Polynucleobacter necessarius subsp. asymbioticus).